The chain runs to 317 residues: GTP cyclohydrolase MptA (317 aa).

The protein belongs to the GTP cyclohydrolase IV family. In terms of assembly, homodimer. It depends on Fe(2+) as a cofactor.

It carries out the reaction GTP + H2O = 7,8-dihydroneopterin 2',3'-cyclic phosphate + formate + diphosphate + H(+). It functions in the pathway cofactor biosynthesis; 5,6,7,8-tetrahydromethanopterin biosynthesis. Converts GTP to 7,8-dihydro-D-neopterin 2',3'-cyclic phosphate, the first intermediate in the biosynthesis of coenzyme methanopterin. The sequence is that of GTP cyclohydrolase MptA from Methanococcoides burtonii (strain DSM 6242 / NBRC 107633 / OCM 468 / ACE-M).